The primary structure comprises 406 residues: Tryptophan synthase beta chain (406 aa).

Lysine 97 carries the post-translational modification N6-(pyridoxal phosphate)lysine.

Belongs to the TrpB family. As to quaternary structure, tetramer of two alpha and two beta chains. Pyridoxal 5'-phosphate serves as cofactor.

It carries out the reaction (1S,2R)-1-C-(indol-3-yl)glycerol 3-phosphate + L-serine = D-glyceraldehyde 3-phosphate + L-tryptophan + H2O. The protein operates within amino-acid biosynthesis; L-tryptophan biosynthesis; L-tryptophan from chorismate: step 5/5. In terms of biological role, the beta subunit is responsible for the synthesis of L-tryptophan from indole and L-serine. The chain is Tryptophan synthase beta chain from Lacticaseibacillus paracasei (strain ATCC 334 / BCRC 17002 / CCUG 31169 / CIP 107868 / KCTC 3260 / NRRL B-441) (Lactobacillus paracasei).